Consider the following 439-residue polypeptide: Chromosomal replication initiator protein DnaA (439 aa).

The domain I, interacts with DnaA modulators stretch occupies residues 1–75; it reads MESWSRCLER…GIREVVLAIG (75 aa). Residues 75–101 are domain II; sequence GSRPKTTELPVPVDTTGRLSSTVPFNG. Residues 102–319 form a domain III, AAA+ region region; sequence NLDTHYNFDN…GALNTLVARA (218 aa). ATP-binding residues include Gly-147, Gly-149, Lys-150, and Thr-151. The interval 320-439 is domain IV, binds dsDNA; the sequence is NFTGRAVTIE…WDKLMRKFSE (120 aa).

It belongs to the DnaA family. In terms of assembly, oligomerizes as a right-handed, spiral filament on DNA at oriC.

Its subcellular location is the cytoplasm. Functionally, plays an essential role in the initiation and regulation of chromosomal replication. ATP-DnaA binds to the origin of replication (oriC) to initiate formation of the DNA replication initiation complex once per cell cycle. Binds the DnaA box (a 9 base pair repeat at the origin) and separates the double-stranded (ds)DNA. Forms a right-handed helical filament on oriC DNA; dsDNA binds to the exterior of the filament while single-stranded (ss)DNA is stabiized in the filament's interior. The ATP-DnaA-oriC complex binds and stabilizes one strand of the AT-rich DNA unwinding element (DUE), permitting loading of DNA polymerase. After initiation quickly degrades to an ADP-DnaA complex that is not apt for DNA replication. Binds acidic phospholipids. This Xylella fastidiosa (strain 9a5c) protein is Chromosomal replication initiator protein DnaA.